Consider the following 339-residue polypeptide: Ketol-acid reductoisomerase (NADP(+)) (339 aa).

In terms of domain architecture, KARI N-terminal Rossmann spans 1–182; the sequence is MRVYYDSDAD…GGGRAGIIET (182 aa). NADP(+) is bound by residues 24–27, Arg48, Ser51, and 83–86; these read YGSQ and DEGQ. Residue His108 is part of the active site. Gly134 is an NADP(+) binding site. The 146-residue stretch at 183-328 folds into the KARI C-terminal knotted domain; that stretch reads TFKEECETDL…EKLRAMMPWI (146 aa). Residues Asp191, Glu195, Glu227, and Glu231 each coordinate Mg(2+). Position 252 (Ser252) interacts with substrate.

This sequence belongs to the ketol-acid reductoisomerase family. The cofactor is Mg(2+).

The catalysed reaction is (2R)-2,3-dihydroxy-3-methylbutanoate + NADP(+) = (2S)-2-acetolactate + NADPH + H(+). It catalyses the reaction (2R,3R)-2,3-dihydroxy-3-methylpentanoate + NADP(+) = (S)-2-ethyl-2-hydroxy-3-oxobutanoate + NADPH + H(+). It functions in the pathway amino-acid biosynthesis; L-isoleucine biosynthesis; L-isoleucine from 2-oxobutanoate: step 2/4. It participates in amino-acid biosynthesis; L-valine biosynthesis; L-valine from pyruvate: step 2/4. Its function is as follows. Involved in the biosynthesis of branched-chain amino acids (BCAA). Catalyzes an alkyl-migration followed by a ketol-acid reduction of (S)-2-acetolactate (S2AL) to yield (R)-2,3-dihydroxy-isovalerate. In the isomerase reaction, S2AL is rearranged via a Mg-dependent methyl migration to produce 3-hydroxy-3-methyl-2-ketobutyrate (HMKB). In the reductase reaction, this 2-ketoacid undergoes a metal-dependent reduction by NADPH to yield (R)-2,3-dihydroxy-isovalerate. This is Ketol-acid reductoisomerase (NADP(+)) from Acidiphilium cryptum (strain JF-5).